Consider the following 128-residue polypeptide: Large ribosomal subunit protein mL51 (128 aa).

The N-terminal 31 residues, 1–31, are a transit peptide targeting the mitochondrion; that stretch reads MAGSLSWVAGRRLWGLVPLACRSFFLGVPRL.

The protein belongs to the mitochondrion-specific ribosomal protein mL51 family. As to quaternary structure, component of the mitochondrial ribosome large subunit (39S) which comprises a 16S rRNA and about 50 distinct proteins. Interacts with OXA1L.

The protein resides in the mitochondrion. The chain is Large ribosomal subunit protein mL51 (MRPL51) from Bos taurus (Bovine).